The following is a 152-amino-acid chain: 3-hydroxyacyl-[acyl-carrier-protein] dehydratase FabZ (152 aa).

Histidine 57 is an active-site residue.

It belongs to the thioester dehydratase family. FabZ subfamily.

It localises to the cytoplasm. It carries out the reaction a (3R)-hydroxyacyl-[ACP] = a (2E)-enoyl-[ACP] + H2O. In terms of biological role, involved in unsaturated fatty acids biosynthesis. Catalyzes the dehydration of short chain beta-hydroxyacyl-ACPs and long chain saturated and unsaturated beta-hydroxyacyl-ACPs. This Bradyrhizobium sp. (strain ORS 278) protein is 3-hydroxyacyl-[acyl-carrier-protein] dehydratase FabZ.